Consider the following 833-residue polypeptide: A disintegrin and metalloproteinase with thrombospondin motifs 4 (833 aa).

An N-terminal signal peptide occupies residues Met1 to Pro49. Residues Leu50 to Arg208 constitute a propeptide that is removed on maturation. The N-linked (GlcNAc...) asparagine glycan is linked to Asn63. The disordered stretch occupies residues Lys180–Arg204. The Cysteine switch signature appears at Pro188–Pro195. Cys190 is a binding site for Zn(2+). Positions Arg214 to Pro424 constitute a Peptidase M12B domain. 11 disulfide bridges follow: Cys289-Cys341, Cys318-Cys323, Cys335-Cys419, Cys373-Cys403, Cys445-Cys468, Cys456-Cys478, Cys463-Cys497, Cys491-Cys502, Cys528-Cys565, Cys532-Cys570, and Cys543-Cys555. An N-linked (GlcNAc...) asparagine glycan is attached at Asn299. His357 provides a ligand contact to Zn(2+). The active site involves Glu358. 2 residues coordinate Zn(2+): His361 and His367. The Disintegrin domain occupies Thr433 to Gln515. In terms of domain architecture, TSP type-1 spans Ala516 to Pro571. Residues Ser682–Lys833 form a spacer region.

As to quaternary structure, interacts with SRPX2. The cofactor is Zn(2+). In terms of processing, the precursor is cleaved by a furin endopeptidase. Post-translationally, glycosylated. Can be O-fucosylated by POFUT2 on a serine or a threonine residue found within the consensus sequence C1-X(2)-(S/T)-C2-G of the TSP type-1 repeat domains where C1 and C2 are the first and second cysteine residue of the repeat, respectively. Fucosylated repeats can then be further glycosylated by the addition of a beta-1,3-glucose residue by the glucosyltransferase, B3GALTL. Fucosylation mediates the efficient secretion of ADAMTS family members. Can also be C-glycosylated with one or two mannose molecules on tryptophan residues within the consensus sequence W-X-X-W of the TPRs, and N-glycosylated. These other glycosylations can also facilitate secretion.

It localises to the secreted. Its subcellular location is the extracellular space. The protein localises to the extracellular matrix. The catalysed reaction is Glutamyl endopeptidase. Bonds cleaved include 370-Thr-Glu-Gly-Glu-|-Ala-Arg-Gly-Ser-377 in the interglobular domain of mammalian aggrecan.. Functionally, cleaves aggrecan, a cartilage proteoglycan, at the '392-Glu-|-Ala-393' site and may be involved in its turnover. Also cleaves COMP. May play an important role in the destruction of aggrecan in arthritic diseases. The polypeptide is A disintegrin and metalloproteinase with thrombospondin motifs 4 (Adamts4) (Mus musculus (Mouse)).